The following is a 513-amino-acid chain: ATP synthase subunit alpha (513 aa).

Residue 169–176 participates in ATP binding; the sequence is GDRQIGKS.

Belongs to the ATPase alpha/beta chains family. As to quaternary structure, F-type ATPases have 2 components, CF(1) - the catalytic core - and CF(0) - the membrane proton channel. CF(1) has five subunits: alpha(3), beta(3), gamma(1), delta(1), epsilon(1). CF(0) has three main subunits: a(1), b(2) and c(9-12). The alpha and beta chains form an alternating ring which encloses part of the gamma chain. CF(1) is attached to CF(0) by a central stalk formed by the gamma and epsilon chains, while a peripheral stalk is formed by the delta and b chains.

Its subcellular location is the cell inner membrane. It carries out the reaction ATP + H2O + 4 H(+)(in) = ADP + phosphate + 5 H(+)(out). Functionally, produces ATP from ADP in the presence of a proton gradient across the membrane. The alpha chain is a regulatory subunit. This chain is ATP synthase subunit alpha, found in Colwellia psychrerythraea (strain 34H / ATCC BAA-681) (Vibrio psychroerythus).